The primary structure comprises 73 residues: Translation initiation factor IF-1 (73 aa).

The S1-like domain occupies 1-73 (MAKKDGAIEV…SRGRIVYRYK (73 aa)).

Belongs to the IF-1 family. In terms of assembly, component of the 30S ribosomal translation pre-initiation complex which assembles on the 30S ribosome in the order IF-2 and IF-3, IF-1 and N-formylmethionyl-tRNA(fMet); mRNA recruitment can occur at any time during PIC assembly.

It localises to the cytoplasm. One of the essential components for the initiation of protein synthesis. Stabilizes the binding of IF-2 and IF-3 on the 30S subunit to which N-formylmethionyl-tRNA(fMet) subsequently binds. Helps modulate mRNA selection, yielding the 30S pre-initiation complex (PIC). Upon addition of the 50S ribosomal subunit IF-1, IF-2 and IF-3 are released leaving the mature 70S translation initiation complex. This Mycobacterium avium (strain 104) protein is Translation initiation factor IF-1.